The primary structure comprises 443 residues: Glucose-6-phosphate isomerase (443 aa).

The Proton donor role is filled by glutamate 285. Active-site residues include histidine 306 and lysine 420.

It belongs to the GPI family.

It localises to the cytoplasm. The enzyme catalyses alpha-D-glucose 6-phosphate = beta-D-fructose 6-phosphate. It functions in the pathway carbohydrate biosynthesis; gluconeogenesis. The protein operates within carbohydrate degradation; glycolysis; D-glyceraldehyde 3-phosphate and glycerone phosphate from D-glucose: step 2/4. Functionally, catalyzes the reversible isomerization of glucose-6-phosphate to fructose-6-phosphate. The sequence is that of Glucose-6-phosphate isomerase from Staphylococcus aureus (strain NCTC 8325 / PS 47).